We begin with the raw amino-acid sequence, 195 residues long: Imidazoleglycerol-phosphate dehydratase (195 aa).

It belongs to the imidazoleglycerol-phosphate dehydratase family.

It localises to the cytoplasm. The catalysed reaction is D-erythro-1-(imidazol-4-yl)glycerol 3-phosphate = 3-(imidazol-4-yl)-2-oxopropyl phosphate + H2O. The protein operates within amino-acid biosynthesis; L-histidine biosynthesis; L-histidine from 5-phospho-alpha-D-ribose 1-diphosphate: step 6/9. The protein is Imidazoleglycerol-phosphate dehydratase of Nitrosomonas eutropha (strain DSM 101675 / C91 / Nm57).